Reading from the N-terminus, the 101-residue chain is Small ribosomal subunit protein uS10 (101 aa).

This sequence belongs to the universal ribosomal protein uS10 family. Part of the 30S ribosomal subunit.

In terms of biological role, involved in the binding of tRNA to the ribosomes. This is Small ribosomal subunit protein uS10 from Amoebophilus asiaticus (strain 5a2).